Here is a 235-residue protein sequence, read N- to C-terminus: Phosphoribosylaminoimidazole-succinocarboxamide synthase (235 aa).

The protein belongs to the SAICAR synthetase family.

It carries out the reaction 5-amino-1-(5-phospho-D-ribosyl)imidazole-4-carboxylate + L-aspartate + ATP = (2S)-2-[5-amino-1-(5-phospho-beta-D-ribosyl)imidazole-4-carboxamido]succinate + ADP + phosphate + 2 H(+). The protein operates within purine metabolism; IMP biosynthesis via de novo pathway; 5-amino-1-(5-phospho-D-ribosyl)imidazole-4-carboxamide from 5-amino-1-(5-phospho-D-ribosyl)imidazole-4-carboxylate: step 1/2. The protein is Phosphoribosylaminoimidazole-succinocarboxamide synthase of Prosthecochloris aestuarii (strain DSM 271 / SK 413).